The chain runs to 307 residues: tRNA pseudouridine synthase B (307 aa).

Asp38 acts as the Nucleophile in catalysis.

The protein belongs to the pseudouridine synthase TruB family. Type 1 subfamily.

It carries out the reaction uridine(55) in tRNA = pseudouridine(55) in tRNA. In terms of biological role, responsible for synthesis of pseudouridine from uracil-55 in the psi GC loop of transfer RNAs. The chain is tRNA pseudouridine synthase B from Bacillus cytotoxicus (strain DSM 22905 / CIP 110041 / 391-98 / NVH 391-98).